A 420-amino-acid chain; its full sequence is UDP-N-acetylmuramoylalanine--D-glutamate ligase (420 aa).

109 to 115 (GSAGKTT) is an ATP binding site.

Belongs to the MurCDEF family.

The protein resides in the cytoplasm. The enzyme catalyses UDP-N-acetyl-alpha-D-muramoyl-L-alanine + D-glutamate + ATP = UDP-N-acetyl-alpha-D-muramoyl-L-alanyl-D-glutamate + ADP + phosphate + H(+). It functions in the pathway cell wall biogenesis; peptidoglycan biosynthesis. Functionally, cell wall formation. Catalyzes the addition of glutamate to the nucleotide precursor UDP-N-acetylmuramoyl-L-alanine (UMA). The chain is UDP-N-acetylmuramoylalanine--D-glutamate ligase from Chlamydia abortus (strain DSM 27085 / S26/3) (Chlamydophila abortus).